A 518-amino-acid polypeptide reads, in one-letter code: Probable cyclic di-GMP phosphodiesterase PdeN (518 aa).

A run of 2 helical transmembrane segments spans residues 16-36 (CIVA…LVAW) and 236-256 (VWYA…LCYY). In terms of domain architecture, EAL spans 261–514 (RMRPGREIMT…DFVRWLKKPY (254 aa)).

The protein localises to the cell inner membrane. The enzyme catalyses 3',3'-c-di-GMP + H2O = 5'-phosphoguanylyl(3'-&gt;5')guanosine + H(+). Its function is as follows. Phosphodiesterase (PDE) that catalyzes the hydrolysis of cyclic-di-GMP (c-di-GMP) to 5'-pGpG. The polypeptide is Probable cyclic di-GMP phosphodiesterase PdeN (Escherichia coli (strain K12)).